The primary structure comprises 215 residues: Porin MspB (215 aa).

An N-terminal signal peptide occupies residues 1–31; sequence MTAFKRVLIAMISALLAGTTGMFVSAGAAHA.

It belongs to the mycobacterial porin (TC 1.B.24) family. In terms of assembly, octamers. Probably forms a goblet with the wide end on the exterior of the outer membrane and a central channel. It is not known if mixed oligomers of MspB with other Msp subunits form in vivo.

Its subcellular location is the cell outer membrane. The protein localises to the secreted. It is found in the cell wall. Functionally, a backup porin induced when MspA, the major porin, is deleted. Probably forms a water-filled channel which favors the permeation of cations. There are about 2400 porins in wild-type, 800 in an mspA deletion and 150 in a double mspA-mspC deletion. A triple mspA-mspC-mspD deletion mutant has low but detectable channel activity. Different conductance values with maxima at 2.3 and 4.6 nanosiemens might be caused by a simultaneous reconstitution of MspB channels into the membrane or by the existence of different MspB conformations. The sequence is that of Porin MspB (mspB) from Mycolicibacterium smegmatis (strain ATCC 700084 / mc(2)155) (Mycobacterium smegmatis).